The sequence spans 211 residues: ATP phosphoribosyltransferase (211 aa).

Belongs to the ATP phosphoribosyltransferase family. Short subfamily. Heteromultimer composed of HisG and HisZ subunits.

It localises to the cytoplasm. It catalyses the reaction 1-(5-phospho-beta-D-ribosyl)-ATP + diphosphate = 5-phospho-alpha-D-ribose 1-diphosphate + ATP. Its pathway is amino-acid biosynthesis; L-histidine biosynthesis; L-histidine from 5-phospho-alpha-D-ribose 1-diphosphate: step 1/9. Its function is as follows. Catalyzes the condensation of ATP and 5-phosphoribose 1-diphosphate to form N'-(5'-phosphoribosyl)-ATP (PR-ATP). Has a crucial role in the pathway because the rate of histidine biosynthesis seems to be controlled primarily by regulation of HisG enzymatic activity. The chain is ATP phosphoribosyltransferase from Bacillus thuringiensis subsp. konkukian (strain 97-27).